The chain runs to 525 residues: COP9 signalosome complex subunit 1b (525 aa).

The PCI domain maps to 298–460 (HFLNANFDHC…KILFAKEADQ (163 aa)).

This sequence belongs to the CSN1 family. As to quaternary structure, component of the CSN complex, probably composed of CSN1b, alien/CSN2, CSN3, CSN4, CSN5, CSN6, CSN7 and CSN8.

Its subcellular location is the cytoplasm. It localises to the nucleus. In terms of biological role, essential component of the COP9 signalosome complex (CSN), a complex involved in various cellular and developmental processes. The CSN complex is an essential regulator of the ubiquitin (Ubl) conjugation pathway by mediating the deneddylation of the cullin subunits of the SCF-type E3 ligase complexes, leading to decrease the Ubl ligase activity of SCF. The CSN complex plays an essential role in oogenesis and embryogenesis and is required for proper photoreceptor R cell differentiation and promote lamina glial cell migration or axon targeting. It also promotes Ubl-dependent degradation of cyclin E (CycE) during early oogenesis. The chain is COP9 signalosome complex subunit 1b (CSN1b) from Drosophila melanogaster (Fruit fly).